The primary structure comprises 618 residues: MAKEKEKLFSEFPPVSREAWIDKITADLKGVPFEKKLVWRTNEGFNVNPFYRREDIEDLKTTTSLPDEYPYVRSTRMHNEWLVRQDIVVGDNVAEANEKALDLLNKGVDSLGFYLKKVHINVDTLAALLKDIELTAVELNFNCCITRAADLLSAFSAYVKKVGADPNKCHGSVSYDPFKKQLVRGVSNPDWVKMTLPVMDAARELPAFRVLNVNAVNLSDAGAFITQELGYALAWGAELLDKLTDAGYKPEEIASRIKFNFGIGSNYFMEIAKFRAARWLWAQIVGSYGDQYKNETAKIHQHATTSMWNKTVFDAHVNLLRTQTETMSAAIAGVDSITVLPFDVTYQQSDDFSERIARNQQLLLKEECHFDKVIDPSAGSYYIETLTNSIGEEAWKLFLSVEDAGGFTQAAETASIQKAVNASNIKRHQSVATRREIFLGTNQFPNFTEVAGDKITLAQGEHDCNCVKSIEPLNFSRGASEFEALRLATEKSGKTPVVFMLTIGNLAMRLARSQFSSNFFGCAGYKLIDNLGFKSVEEGVDAALAAKADIVVLCSSDDEYAEYAPAAFDYLAGRAEFVVAGAPACMADLEAKGIRNYVHVKSNVLETLRAFNDKFGIR.

The protein belongs to the methylmalonyl-CoA mutase family. Heterodimer of an alpha and a beta chain. It depends on adenosylcob(III)alamin as a cofactor.

It carries out the reaction (R)-methylmalonyl-CoA = succinyl-CoA. The protein operates within metabolic intermediate metabolism; propanoyl-CoA degradation; succinyl-CoA from propanoyl-CoA: step 3/3. Its function is as follows. Catalyzes the isomerization of succinyl-CoA to methylmalonyl-CoA during synthesis of propionate from tricarboxylic acid-cycle intermediates. This chain is Methylmalonyl-CoA mutase small subunit (mutA), found in Porphyromonas gingivalis (strain ATCC BAA-308 / W83).